The primary structure comprises 291 residues: ATP synthase gamma chain (291 aa).

This sequence belongs to the ATPase gamma chain family. In terms of assembly, F-type ATPases have 2 components, CF(1) - the catalytic core - and CF(0) - the membrane proton channel. CF(1) has five subunits: alpha(3), beta(3), gamma(1), delta(1), epsilon(1). CF(0) has three main subunits: a, b and c.

Its subcellular location is the cell inner membrane. Functionally, produces ATP from ADP in the presence of a proton gradient across the membrane. The gamma chain is believed to be important in regulating ATPase activity and the flow of protons through the CF(0) complex. This chain is ATP synthase gamma chain, found in Burkholderia ambifaria (strain MC40-6).